Here is a 623-residue protein sequence, read N- to C-terminus: Stretch-activated cation channel MID1 (623 aa).

Topologically, residues 1 to 57 are extracellular; the sequence is MPAREVYLKRPATRRQLEGICTRYDGQQRITQLDCEEGCSKRTQPPQRLNPRYKSPD. The helical transmembrane segment at 58-78 threads the bilayer; that stretch reads LIHISFIIVLLCILSMTSSVV. Residues 79-623 are Cytoplasmic-facing; the sequence is AQTTTGSSSS…DRWGNRWCNG (545 aa). The span at 524–536 shows a compositional bias: low complexity; sequence TSTSSGTFPTPST. The disordered stretch occupies residues 524 to 544; that stretch reads TSTSSGTFPTPSTVLRTPSSP. Residues 600-623 form a required for targeting to the cell membrane region; that stretch reads SYGDGSAAQGVAAQDRWGNRWCNG.

Forms an oligomer by disulfide bonds. Interacts with CCH1 to form a Ca(2+) influx channel. Interacts (via C-terminus) with CCP1/cytochrome c peroxidase; the interaction may contribute to cellular detoxification of radicals.

The protein localises to the cell membrane. In terms of biological role, calcium-permeable, cation-selective stretch-activated channel (SAC) that functions together with CCH1 to mediate calcium entry into cells. May additionally play a role in cellular detoxification of radicals. This chain is Stretch-activated cation channel MID1, found in Cryptococcus neoformans var. grubii serotype A (strain H99 / ATCC 208821 / CBS 10515 / FGSC 9487) (Filobasidiella neoformans var. grubii).